A 215-amino-acid polypeptide reads, in one-letter code: ATP phosphoribosyltransferase (215 aa).

It belongs to the ATP phosphoribosyltransferase family. Short subfamily. Heteromultimer composed of HisG and HisZ subunits.

The protein localises to the cytoplasm. It carries out the reaction 1-(5-phospho-beta-D-ribosyl)-ATP + diphosphate = 5-phospho-alpha-D-ribose 1-diphosphate + ATP. The protein operates within amino-acid biosynthesis; L-histidine biosynthesis; L-histidine from 5-phospho-alpha-D-ribose 1-diphosphate: step 1/9. Its function is as follows. Catalyzes the condensation of ATP and 5-phosphoribose 1-diphosphate to form N'-(5'-phosphoribosyl)-ATP (PR-ATP). Has a crucial role in the pathway because the rate of histidine biosynthesis seems to be controlled primarily by regulation of HisG enzymatic activity. The sequence is that of ATP phosphoribosyltransferase from Gloeothece citriformis (strain PCC 7424) (Cyanothece sp. (strain PCC 7424)).